The chain runs to 237 residues: Ribonuclease 3 (237 aa).

An RNase III domain is found at 4–133 (LTELEKSLGV…VLAAIYLDKG (130 aa)). Glu46 is a binding site for Mg(2+). Residues Asp50 and Glu122 contribute to the active site. Glu122 contacts Mg(2+). The region spanning 160–229 (DYKSRLQELV…AKEALQQFEN (70 aa)) is the DRBM domain.

It belongs to the ribonuclease III family. In terms of assembly, homodimer. Mg(2+) is required as a cofactor.

The protein localises to the cytoplasm. It carries out the reaction Endonucleolytic cleavage to 5'-phosphomonoester.. In terms of biological role, digests double-stranded RNA. Involved in the processing of primary rRNA transcript to yield the immediate precursors to the large and small rRNAs (23S and 16S). Processes some mRNAs, and tRNAs when they are encoded in the rRNA operon. Processes pre-crRNA and tracrRNA of type II CRISPR loci if present in the organism. This Dehalococcoides mccartyi (strain ATCC BAA-2266 / KCTC 15142 / 195) (Dehalococcoides ethenogenes (strain 195)) protein is Ribonuclease 3.